The primary structure comprises 89 residues: Large ribosomal subunit protein eL43 (89 aa).

The tract at residues 1–28 (MVKKSKVGSTGRFGARYGRKAKRTVKDI) is disordered. The segment at 38–59 (CPKCDRPGVKRTHAGIWKCRKC) adopts a C4-type zinc-finger fold.

The protein belongs to the eukaryotic ribosomal protein eL43 family. It depends on Zn(2+) as a cofactor.

This Methanosphaera stadtmanae (strain ATCC 43021 / DSM 3091 / JCM 11832 / MCB-3) protein is Large ribosomal subunit protein eL43.